The primary structure comprises 75 residues: Theromacin (75 aa).

Disulfide bonds link cysteine 2/cysteine 9, cysteine 24/cysteine 28, cysteine 31/cysteine 73, cysteine 39/cysteine 47, and cysteine 57/cysteine 59.

It belongs to the macin family.

The protein resides in the secreted. Has a bactericial activity. The protein is Theromacin of Hirudo medicinalis (Medicinal leech).